The sequence spans 55 residues: Omega-ctenitoxin-Pr2a (55 aa).

Intrachain disulfides connect Cys-2-Cys-16, Cys-9-Cys-22, Cys-15-Cys-37, Cys-24-Cys-35, and Cys-45-Cys-52.

In terms of tissue distribution, expressed by the venom gland.

Its subcellular location is the secreted. Its function is as follows. Antagonist of L-type calcium channels (Cav1/CACNA1). In vivo, causes paralysis in posterior limbs, and gradual decrease in movement and aggression during 24 hours after intracerebroventricular injection in mice at dose levels of 3 ug per mouse. The sequence is that of Omega-ctenitoxin-Pr2a from Phoneutria reidyi (Brazilian Amazonian armed spider).